A 188-amino-acid chain; its full sequence is Elongation factor P-like protein (188 aa).

It belongs to the elongation factor P family.

This Xylella fastidiosa (strain 9a5c) protein is Elongation factor P-like protein.